The sequence spans 124 residues: Trophoblast-specific protein alpha (124 aa).

A signal peptide spans 1-18 (MTPTIFLVILCLGVASAV). Disordered stretches follow at residues 51 to 74 (KLHS…SGQL) and 91 to 124 (FEEE…NQPQ). Residues 62-74 (EGSNIEMSASGQL) are compositionally biased toward polar residues. Positions 103–112 (DDPEFEDYTE) are enriched in acidic residues.

The protein localises to the secreted. The protein resides in the extracellular space. It may be a growth factor/hormone, perhaps involved in interaction between the maternal and fetal systems in maintenance of pregnancy. The polypeptide is Trophoblast-specific protein alpha (Tpbpa) (Mus musculus (Mouse)).